The following is a 59-amino-acid chain: Salivary thrombin inhibitor XC-43 (59 aa).

An N-terminal signal peptide occupies residues 1–23 (MNLQFLFIFIAFCVMLFAQIVTA).

Interacts with human F2 (thrombin). In terms of tissue distribution, salivary gland (at protein level).

The protein localises to the secreted. Anticoagulant protein that acts as a competitive inhibitor of host thrombin. Inhibits thrombin-mediated host platelet aggregation. The sequence is that of Salivary thrombin inhibitor XC-43 from Xenopsylla cheopis (Oriental rat flea).